Reading from the N-terminus, the 425-residue chain is Elongation factor 1-alpha (425 aa).

One can recognise a tr-type G domain in the interval 5 to 221 (KPHMNLAVIG…DTFKEPSKPT (217 aa)). Positions 14 to 21 (GHIDHGKS) are G1. 14–21 (GHIDHGKS) is a GTP binding site. Ser-21 serves as a coordination point for Mg(2+). Residues 70 to 74 (GITID) are G2. A G3 region spans residues 91 to 94 (DCPG). GTP contacts are provided by residues 91 to 95 (DCPGH) and 146 to 149 (NKMD). The tract at residues 146–149 (NKMD) is G4. Positions 185-187 (SSL) are G5.

The protein belongs to the TRAFAC class translation factor GTPase superfamily. Classic translation factor GTPase family. EF-Tu/EF-1A subfamily.

The protein localises to the cytoplasm. The enzyme catalyses GTP + H2O = GDP + phosphate + H(+). In terms of biological role, GTP hydrolase that promotes the GTP-dependent binding of aminoacyl-tRNA to the A-site of ribosomes during protein biosynthesis. This Methanoregula boonei (strain DSM 21154 / JCM 14090 / 6A8) protein is Elongation factor 1-alpha.